A 263-amino-acid polypeptide reads, in one-letter code: Phosphatidylserine decarboxylase proenzyme (263 aa).

Active-site charge relay system; for autoendoproteolytic cleavage activity residues include D90, H146, and S230. S230 (schiff-base intermediate with substrate; via pyruvic acid; for decarboxylase activity) is an active-site residue. Position 230 is a pyruvic acid (Ser); by autocatalysis (S230).

This sequence belongs to the phosphatidylserine decarboxylase family. PSD-B subfamily. Prokaryotic type I sub-subfamily. In terms of assembly, heterodimer of a large membrane-associated beta subunit and a small pyruvoyl-containing alpha subunit. It depends on pyruvate as a cofactor. Post-translationally, is synthesized initially as an inactive proenzyme. Formation of the active enzyme involves a self-maturation process in which the active site pyruvoyl group is generated from an internal serine residue via an autocatalytic post-translational modification. Two non-identical subunits are generated from the proenzyme in this reaction, and the pyruvate is formed at the N-terminus of the alpha chain, which is derived from the carboxyl end of the proenzyme. The autoendoproteolytic cleavage occurs by a canonical serine protease mechanism, in which the side chain hydroxyl group of the serine supplies its oxygen atom to form the C-terminus of the beta chain, while the remainder of the serine residue undergoes an oxidative deamination to produce ammonia and the pyruvoyl prosthetic group on the alpha chain. During this reaction, the Ser that is part of the protease active site of the proenzyme becomes the pyruvoyl prosthetic group, which constitutes an essential element of the active site of the mature decarboxylase.

It is found in the cell membrane. The enzyme catalyses a 1,2-diacyl-sn-glycero-3-phospho-L-serine + H(+) = a 1,2-diacyl-sn-glycero-3-phosphoethanolamine + CO2. The protein operates within phospholipid metabolism; phosphatidylethanolamine biosynthesis; phosphatidylethanolamine from CDP-diacylglycerol: step 2/2. Catalyzes the formation of phosphatidylethanolamine (PtdEtn) from phosphatidylserine (PtdSer). This is Phosphatidylserine decarboxylase proenzyme from Bacillus subtilis (strain 168).